The chain runs to 415 residues: Gamma-glutamyl phosphate reductase (415 aa).

Belongs to the gamma-glutamyl phosphate reductase family.

It is found in the cytoplasm. It carries out the reaction L-glutamate 5-semialdehyde + phosphate + NADP(+) = L-glutamyl 5-phosphate + NADPH + H(+). Its pathway is amino-acid biosynthesis; L-proline biosynthesis; L-glutamate 5-semialdehyde from L-glutamate: step 2/2. Its function is as follows. Catalyzes the NADPH-dependent reduction of L-glutamate 5-phosphate into L-glutamate 5-semialdehyde and phosphate. The product spontaneously undergoes cyclization to form 1-pyrroline-5-carboxylate. This Desulforamulus reducens (strain ATCC BAA-1160 / DSM 100696 / MI-1) (Desulfotomaculum reducens) protein is Gamma-glutamyl phosphate reductase.